Consider the following 178-residue polypeptide: Fatty-acid and retinol-binding protein 1 (178 aa).

Positions 1–16 (MYHQLILLALIGTIMA) are cleaved as a signal peptide. Coiled-coil stretches lie at residues 67-89 (DAAL…ELRN) and 129-154 (IKQA…LKVT).

Belongs to the fatty-acid and retinol-binding protein (FARBP) family. Not glycosylated.

Its subcellular location is the secreted. Functionally, binds retinol and different fatty acids. The protein is Fatty-acid and retinol-binding protein 1 of Loa loa (Eye worm).